Here is a 375-residue protein sequence, read N- to C-terminus: Aminomethyltransferase (375 aa).

It belongs to the GcvT family. The glycine cleavage system is composed of four proteins: P, T, L and H.

The catalysed reaction is N(6)-[(R)-S(8)-aminomethyldihydrolipoyl]-L-lysyl-[protein] + (6S)-5,6,7,8-tetrahydrofolate = N(6)-[(R)-dihydrolipoyl]-L-lysyl-[protein] + (6R)-5,10-methylene-5,6,7,8-tetrahydrofolate + NH4(+). Functionally, the glycine cleavage system catalyzes the degradation of glycine. The protein is Aminomethyltransferase of Cupriavidus necator (strain ATCC 17699 / DSM 428 / KCTC 22496 / NCIMB 10442 / H16 / Stanier 337) (Ralstonia eutropha).